Here is a 487-residue protein sequence, read N- to C-terminus: b(0,+)-type amino acid transporter 1 (487 aa).

The disordered stretch occupies residues 1 to 20 (MEETSLRRRREDEKSTHSTE). Topologically, residues 1–31 (MEETSLRRRREDEKSTHSTELKTTSLQKEVG) are cytoplasmic. Ser-18 carries the post-translational modification Phosphoserine. Residues 32-55 (LLSGICIIVGTIIGSGIFISPKSV) traverse the membrane as a helical segment. Position 43–47 (43–47 (IIGSG)) interacts with L-arginine. Topologically, residues 56–62 (LANTESV) are extracellular. The chain crosses the membrane as a helical span at residues 63–84 (GPCLIIWAACGILATLGALCFA). Residues 85 to 110 (ELGTMITKSGGEYPYLMEAFGPIPAY) lie on the Cytoplasmic side of the membrane. Residues 111-137 (LFSWTSLIVMKPSSFAIICLSFSEYVC) form a helical membrane-spanning segment. At 138–147 (AAFYSGCKPP) the chain is on the extracellular side. 2 consecutive transmembrane segments (helical) span residues 148–169 (AVVV…NALS) and 170–193 (VRLG…IIII). At 194 to 217 (SGLVFLAQGNVKNFQNSFEGTQTS) the chain is on the extracellular side. A helical transmembrane segment spans residues 218–238 (VGAISLAFYNGLWAYDGWNQL). Asp-233 provides a ligand contact to L-arginine. Over 239–251 (NYITEELRNPYRN) the chain is Cytoplasmic. Residues 252-274 (LPMAIVIGIPLVTVCYILMNIAY) traverse the membrane as a helical segment. Residues 275 to 302 (FTVMTPTELLQSQAVAVTFGDRVLYPAS) lie on the Extracellular side of the membrane. A helical transmembrane segment spans residues 303-325 (WVVPLFVAFSTIGAANGTCFTAG). The Cytoplasmic portion of the chain corresponds to 326–351 (RLIYVAGREGHMLKVLSYISVKRLTP). The next 2 membrane-spanning stretches (helical) occupy residues 352 to 370 (APAL…IPGD) and 371 to 391 (INSL…MTIL). Residues 392 to 410 (GLVVMRFTRKDLERPIKVP) are Cytoplasmic-facing. A helical membrane pass occupies residues 411–431 (LFIPIIVILVSLFLILAPIIS). At 432-434 (EPA) the chain is on the extracellular side. The chain crosses the membrane as a helical span at residues 435 to 450 (WEYLYCVLFILSGLIF). Residues 451-487 (YFLFVYYKFGWAQRISRPVTKHLQMLMEVVPPEKDPE) are Cytoplasmic-facing.

This sequence belongs to the amino acid-polyamine-organocation (APC) superfamily. In terms of assembly, disulfide-linked heterodimer composed of the catalytic light chain subunit SLC7A9 and the heavy chain subunit SLC3A1. The heterodimer is the minimal functional unit. Assembles in heterotetramers (dimers of heterodimers) and higher order oligomers; the oligomerization is mediated by SLC3A1 likely to prevent degradation and facilitate heteromer trafficking to the plasma membrane. Interacts with CAV1. As to expression, expressed in the brush border membrane in the kidney (at protein level).

The protein resides in the apical cell membrane. The enzyme catalyses L-leucine(out) + L-arginine(in) = L-leucine(in) + L-arginine(out). It catalyses the reaction L-histidine(out) + L-arginine(in) = L-histidine(in) + L-arginine(out). The catalysed reaction is L-arginine(in) + L-phenylalanine(out) = L-arginine(out) + L-phenylalanine(in). It carries out the reaction L-cysteine(out) + L-arginine(in) = L-cysteine(in) + L-arginine(out). The enzyme catalyses L-cystine(out) + L-arginine(in) = L-cystine(in) + L-arginine(out). It catalyses the reaction L-lysine(out) + L-arginine(in) = L-lysine(in) + L-arginine(out). In terms of biological role, associates with SLC3A1 to form a functional transporter complex that mediates the electrogenic exchange between cationic amino acids and neutral amino acids, with a stoichiometry of 1:1. Has system b(0,+)-like activity with high affinity for extracellular cationic amino acids and L-cystine and lower affinity for intracellular neutral amino acids. Substrate exchange is driven by high concentration of intracellular neutral amino acids and the intracellular reduction of L-cystine to L-cysteine. Required for reabsorption of L-cystine and dibasic amino acids across the brush border membrane in renal proximal tubules. This chain is b(0,+)-type amino acid transporter 1 (Slc7a9), found in Mus musculus (Mouse).